A 1088-amino-acid chain; its full sequence is MASPTDPQAQENFSDVRKVGYLRKPKSMHKRFFVLRAASESSLARLEYYENEKKWRHKSGAPKRSIPLESCFNINKRADSKNKHLVALYTKDECFAIAAECEQEQEGWYQALVDLHNRGKTHHQHHNHDGAVNGVHDGLNGDEVYGEVTPPGLAFKEVWQVIMKPKGLGQLKNLVGIYRLCLTNRTISLVKLNSDAAAVVLQLMNIRRCGHSENFFFIEVGRSAVTGAGEFWMQVDDSVVAQNMHETILEAMKALSDEFRPRSKSQSSSNCSNPISVPLRRHHLNHPPPSQVGLNRRARTESATATSPAGGAAKHGSSSFRVRASSDGEGTMSRPASMEGSPVSPSASRTQSHRHRGSSRLHPPLNHSRSIPMPATRCSPSATSPVSLSSSSTSGHGSTSDCMCPRRSSASISGSPSDGGFISSDEYGSSPCDFRSSFRSVTPDSMGHTPPAREEELNNYICMGKSSSHLQRGPQQRYQPSRGEELTDFDKVFRKRTHSSGTSPPTVSHQKTPSQSSIEEYTEMMPTHPVRLTSFRHSAFVPTYSYPEECLDLHLEGSRANHKDDGYMPMSPGVAPVSTKTNDYMPMSPKSVSAPQQIINPRWHSAVDSNGYMMMSPSGSCSPDNTNYSKIWTNGTNPKLSIDSIEGKLPCSDYINMSPASGSTTSTPPDSYLNSVEESTKPVYSYFSLPRSFKHVHRKSEDGNLRISANSGHNLYTEDSSSSSTSSDSLGGQDPQQPRKGEGCIQGKRLTRPTRLSLENSSKASTLPRVREPALPPEPKSPGEYVNIEFNDKVFSGGLVPSMCSLPFVQSRVVPQRENLSEYMNMDLGVWRAKTSYASTSSYEPPNKPVNSVCPTETCSSSRPPIRGKPISRDYMSMQLGSLCPDYSQVPPTRLSAKSITLSSSKSNYAEMSSGRVSDNIPAIAPASNSSLSEASRSSLLGQGSGPSAFTRVSLSPNRNPSAKVIRAGDPQGRRRHSSETFSSTPTTARVTTGPVSGEDVKRHSSASFENVWLRPGEIARRDSLQPSDHTHNGLNYIDLDLAKDLSSLDHCNSHQSGVSHPSDDLSPYASITFHKLEEHRSQAETEE.

Positions 15-117 constitute a PH domain; sequence DVRKVGYLRK…WYQALVDLHN (103 aa). The residue at position 48 (Tyr48) is a Phosphotyrosine. Residues 155–259 enclose the IRS-type PTB domain; it reads FKEVWQVIMK…EAMKALSDEF (105 aa). A disordered region spans residues 259-428; the sequence is FRPRSKSQSS…GGFISSDEYG (170 aa). Low complexity-rich tracts occupy residues 264-278, 302-312, 379-400, and 408-420; these read KSQS…ISVP, SATATSPAGGA, SPSA…GSTS, and SSAS…SDGG. A Phosphoserine modification is found at Ser307. Tyr460 is subject to Phosphotyrosine; by INSR. A YXXM motif 1 motif is present at residues 460–463; the sequence is YICM. 2 stretches are compositionally biased toward polar residues: residues 466-479 and 499-516; these read SSSH…QRYQ and SSGT…PSQS. Disordered regions lie at residues 466–485 and 496–516; these read SSSH…RGEE and RTHS…PSQS. 5 short sequence motifs (YXXM motif) span residues 521 to 524, 567 to 570, 584 to 587, 612 to 615, and 654 to 657; these read YTEM, YMPM, YMMM, and YINM. Tyr567 and Tyr584 each carry phosphotyrosine; by INSR. Tyr612 is modified (phosphotyrosine). The disordered stretch occupies residues 704–785; the sequence is NLRISANSGH…PPEPKSPGEY (82 aa). Polar residues predominate over residues 707–718; the sequence is ISANSGHNLYTE. The segment covering 719 to 729 has biased composition (low complexity); it reads DSSSSSTSSDS. 2 positions are modified to phosphotyrosine; by INSR: Tyr785 and Tyr823. A GRB2-binding region spans residues 785–787; the sequence is YVN. Positions 823–826 match the YXXM motif 7 motif; that stretch reads YMNM. Polar residues predominate over residues 840 to 863; it reads TSSYEPPNKPVNSVCPTETCSSSR. The disordered stretch occupies residues 840–868; the sequence is TSSYEPPNKPVNSVCPTETCSSSRPPIRG. A Phosphotyrosine; by INSR modification is found at Tyr875. 2 consecutive short sequence motifs (YXXM motif) follow at residues 875–878 and 909–912; these read YMSM and YAEM. Residues 935–1006 form a disordered region; the sequence is ASRSSLLGQG…SGEDVKRHSS (72 aa). 2 stretches are compositionally biased toward polar residues: residues 946 to 961 and 980 to 995; these read GPSA…NRNP and ETFS…TTGP. Tyr1037 and Tyr1069 each carry phosphotyrosine; by INSR.

Interacts with the NPXY motif of tyrosine-phosphorylated igf1r and insr via the PTB domain. Binds to phosphatidylinositol 3-kinase p85 subunit at a low level in vitro prior to phosphorylation. Binding is greatly enhanced following tyrosine phosphorylation by insr and probably occurs via the phosphorylated YXXM motifs. Phosphorylation of Tyr-785 is required for grb2-binding.

Functionally, may mediate the control of various cellular processes by insulin. When phosphorylated by the insulin receptor binds specifically to various cellular proteins containing SH2 domains such as phosphatidylinositol 3-kinase p85 subunit or grb2. Activates phosphatidylinositol 3-kinase when bound to the regulatory p85 subunit. This chain is Insulin receptor substrate 1-B (irs1-b), found in Xenopus laevis (African clawed frog).